A 131-amino-acid chain; its full sequence is Small ribosomal subunit protein uS11 (131 aa).

Belongs to the universal ribosomal protein uS11 family. As to quaternary structure, part of the 30S ribosomal subunit. Interacts with proteins S7 and S18. Binds to IF-3.

Functionally, located on the platform of the 30S subunit, it bridges several disparate RNA helices of the 16S rRNA. Forms part of the Shine-Dalgarno cleft in the 70S ribosome. This is Small ribosomal subunit protein uS11 from Helicobacter pylori (strain P12).